Here is a 218-residue protein sequence, read N- to C-terminus: Adenylate kinase (218 aa).

Residue 10-15 (GAGKGT) coordinates ATP. An NMP region spans residues 30–59 (STGDMLRAAVQAQTPVGIEAKKVMDAGKLV). Residues threonine 31, arginine 36, 57 to 59 (KLV), 85 to 88 (GFPR), and glutamine 92 contribute to the AMP site. The segment at 122 to 159 (GRRVHLSSGRTYHVRFNPPKKEGLDDLTGEPLVQREDD) is LID. Residues arginine 123 and 132–133 (TY) contribute to the ATP site. Arginine 156 and arginine 167 together coordinate AMP. Residue glycine 203 coordinates ATP.

Belongs to the adenylate kinase family. In terms of assembly, monomer.

The protein localises to the cytoplasm. The catalysed reaction is AMP + ATP = 2 ADP. The protein operates within purine metabolism; AMP biosynthesis via salvage pathway; AMP from ADP: step 1/1. Its function is as follows. Catalyzes the reversible transfer of the terminal phosphate group between ATP and AMP. Plays an important role in cellular energy homeostasis and in adenine nucleotide metabolism. In Chlorobium phaeobacteroides (strain DSM 266 / SMG 266 / 2430), this protein is Adenylate kinase.